The primary structure comprises 197 residues: Interleukin-17C (197 aa).

Residues 1–18 (MTLLPGLLFLTWLHTCLA) form the signal peptide. Cystine bridges form between Cys129/Cys189 and Cys134/Cys191.

The protein belongs to the IL-17 family. As to quaternary structure, binds to a heterodimer formed by IL17RA and IL17RE.

The protein resides in the secreted. Cytokine that plays a crucial role in innate immunity of the epithelium, including to intestinal bacterial pathogens, in an autocrine manner. Stimulates the production of antibacterial peptides and pro-inflammatory molecules for host defense by signaling through the NF-kappa-B and MAPK pathways. Acts synergically with IL22 in inducing the expression of antibacterial peptides, including S100A8, S100A9, REG3A and REG3G. Synergy is also observed with TNF and IL1B in inducing DEFB2 from keratinocytes. Depending on the type of insult, may have both protective and pathogenic properties, either by maintaining epithelial homeostasis after an inflammatory challenge or by promoting inflammatory phenotype. Enhanced IL17C/IL17RE signaling may also lead to greater susceptibility to autoimmune diseases. This Homo sapiens (Human) protein is Interleukin-17C (IL17C).